We begin with the raw amino-acid sequence, 500 residues long: Glycerol kinase (500 aa).

ADP is bound at residue threonine 12. Threonine 12, threonine 13, and serine 14 together coordinate ATP. A sn-glycerol 3-phosphate-binding site is contributed by threonine 12. Arginine 16 serves as a coordination point for ADP. Residues arginine 82, glutamate 83, tyrosine 135, and aspartate 245 each contribute to the sn-glycerol 3-phosphate site. Positions 82, 83, 135, 245, and 246 each coordinate glycerol. 2 residues coordinate ADP: threonine 267 and glycine 310. Threonine 267, glycine 310, glutamine 314, and glycine 411 together coordinate ATP. Residues glycine 411 and asparagine 415 each coordinate ADP.

Belongs to the FGGY kinase family. Homotetramer and homodimer (in equilibrium).

The enzyme catalyses glycerol + ATP = sn-glycerol 3-phosphate + ADP + H(+). It participates in polyol metabolism; glycerol degradation via glycerol kinase pathway; sn-glycerol 3-phosphate from glycerol: step 1/1. Activated by phosphorylation and inhibited by fructose 1,6-bisphosphate (FBP). Key enzyme in the regulation of glycerol uptake and metabolism. Catalyzes the phosphorylation of glycerol to yield sn-glycerol 3-phosphate. This chain is Glycerol kinase, found in Clostridium perfringens (strain SM101 / Type A).